We begin with the raw amino-acid sequence, 280 residues long: Putative ABC transporter ATP-binding protein MTH_133 (280 aa).

Residues 6–241 (IEAVDIRYTY…IDTIRGANLR (236 aa)) enclose the ABC transporter domain. Residue 39–46 (GPNGAGKS) participates in ATP binding.

This sequence belongs to the ABC transporter superfamily.

The protein resides in the cell membrane. Its function is as follows. Probably part of an ABC transporter complex. Responsible for energy coupling to the transport system. This Methanothermobacter thermautotrophicus (strain ATCC 29096 / DSM 1053 / JCM 10044 / NBRC 100330 / Delta H) (Methanobacterium thermoautotrophicum) protein is Putative ABC transporter ATP-binding protein MTH_133.